Here is a 223-residue protein sequence, read N- to C-terminus: Deoxyribose-phosphate aldolase 2 (223 aa).

Asp89 serves as the catalytic Proton donor/acceptor. Lys152 (schiff-base intermediate with acetaldehyde) is an active-site residue. Lys181 serves as the catalytic Proton donor/acceptor.

The protein belongs to the DeoC/FbaB aldolase family. DeoC type 1 subfamily.

It is found in the cytoplasm. It carries out the reaction 2-deoxy-D-ribose 5-phosphate = D-glyceraldehyde 3-phosphate + acetaldehyde. It functions in the pathway carbohydrate degradation; 2-deoxy-D-ribose 1-phosphate degradation; D-glyceraldehyde 3-phosphate and acetaldehyde from 2-deoxy-alpha-D-ribose 1-phosphate: step 2/2. Functionally, catalyzes a reversible aldol reaction between acetaldehyde and D-glyceraldehyde 3-phosphate to generate 2-deoxy-D-ribose 5-phosphate. The protein is Deoxyribose-phosphate aldolase 2 of Bacillus licheniformis (strain ATCC 14580 / DSM 13 / JCM 2505 / CCUG 7422 / NBRC 12200 / NCIMB 9375 / NCTC 10341 / NRRL NRS-1264 / Gibson 46).